A 252-amino-acid polypeptide reads, in one-letter code: Small ribosomal subunit protein uS3 (252 aa).

The KH type-2 domain maps to 39–111 (IRKLINNFTK…DVNLNVLEVK (73 aa)). The tract at residues 222–252 (KPFASQSSNTPNRRPRNFKGGNNNHVNAKKN) is disordered. A compositionally biased stretch (polar residues) spans 241-252 (GGNNNHVNAKKN).

This sequence belongs to the universal ribosomal protein uS3 family. Part of the 30S ribosomal subunit. Forms a tight complex with proteins S10 and S14.

Binds the lower part of the 30S subunit head. Binds mRNA in the 70S ribosome, positioning it for translation. In Onion yellows phytoplasma (strain OY-M), this protein is Small ribosomal subunit protein uS3.